The following is a 405-amino-acid chain: Tryptophan synthase beta chain (405 aa).

Residue K98 is modified to N6-(pyridoxal phosphate)lysine.

The protein belongs to the TrpB family. As to quaternary structure, tetramer of two alpha and two beta chains. It depends on pyridoxal 5'-phosphate as a cofactor.

It catalyses the reaction (1S,2R)-1-C-(indol-3-yl)glycerol 3-phosphate + L-serine = D-glyceraldehyde 3-phosphate + L-tryptophan + H2O. It functions in the pathway amino-acid biosynthesis; L-tryptophan biosynthesis; L-tryptophan from chorismate: step 5/5. Functionally, the beta subunit is responsible for the synthesis of L-tryptophan from indole and L-serine. The sequence is that of Tryptophan synthase beta chain from Afipia carboxidovorans (strain ATCC 49405 / DSM 1227 / KCTC 32145 / OM5) (Oligotropha carboxidovorans).